The primary structure comprises 502 residues: Glycerol kinase (502 aa).

Thr-14 contacts ADP. Positions 14, 15, and 16 each coordinate ATP. Thr-14 contacts sn-glycerol 3-phosphate. Position 18 (Arg-18) interacts with ADP. The sn-glycerol 3-phosphate site is built by Arg-84, Glu-85, Tyr-136, and Asp-246. The glycerol site is built by Arg-84, Glu-85, Tyr-136, Asp-246, and Gln-247. ADP-binding residues include Thr-268 and Gly-311. Thr-268, Gly-311, Gln-315, and Gly-412 together coordinate ATP. ADP is bound by residues Gly-412 and Asn-416.

Belongs to the FGGY kinase family. Homotetramer and homodimer (in equilibrium). Heterodimer with EIIA-Glc. Binds 1 zinc ion per glycerol kinase EIIA-Glc dimer. The zinc ion is important for dimerization.

It carries out the reaction glycerol + ATP = sn-glycerol 3-phosphate + ADP + H(+). The protein operates within polyol metabolism; glycerol degradation via glycerol kinase pathway; sn-glycerol 3-phosphate from glycerol: step 1/1. Activity of this regulatory enzyme is affected by several metabolites. Allosterically and non-competitively inhibited by fructose 1,6-bisphosphate (FBP) and unphosphorylated phosphocarrier protein EIIA-Glc (III-Glc), an integral component of the bacterial phosphotransferase (PTS) system. Its function is as follows. Key enzyme in the regulation of glycerol uptake and metabolism. Catalyzes the phosphorylation of glycerol to yield sn-glycerol 3-phosphate. This chain is Glycerol kinase, found in Salmonella heidelberg (strain SL476).